The primary structure comprises 278 residues: Envelope glycoprotein L (278 aa).

An N-terminal signal peptide occupies residues 1-30 (MCRRPDCGFSFSPGPVVLLWCCLLLPIVSS). The region spanning 43–256 (VPAECPELTR…DKYYAGLPPE (214 aa)) is the gL betaherpesvirus-type domain. Cysteines 154 and 159 form a disulfide.

The protein belongs to the herpesviridae glycoprotein L (gL) family. Betaherpesvirinae gL subfamily. As to quaternary structure, interacts with glycoprotein H (gH); this interaction is necessary for the correct processing and cell surface expression of gH. Forms the envelope pentamer complex (PC) composed of gH, gL, UL128, UL130, and UL131A. The pentamer interacts with host NRP2. Forms the envelope trimer complex composed of gH, gL, and gO. The trimer interacts with host PDGFRA. The trimer also interacts with host EPHA2.

It localises to the virion membrane. The protein localises to the host cell membrane. It is found in the host Golgi apparatus. Its subcellular location is the host trans-Golgi network. Its function is as follows. The heterodimer glycoprotein H-glycoprotein L is required for the fusion of viral and plasma membranes leading to virus entry into the host cell. Acts as a functional inhibitor of gH and maintains gH in an inhibited form. Upon binding to host integrins, gL dissociates from gH leading to activation of the viral fusion glycoproteins gB and gH. In human cytomegalovirus, forms two distincts complexes to mediate viral entry, a trimer and a pentamer at the surface of the virion envelope. The gH-gL-gO trimer is required for infection in fibroblasts by interacting with host PDGFRA, and in glioblastoma cells by interacting with host EPHA2. The gH-gL-UL128-UL130-UL131A pentamer is essential for viral entry in epithelial, endothelial and myeloid cells via interaction with host NRP2. This chain is Envelope glycoprotein L, found in Homo sapiens (Human).